The primary structure comprises 161 residues: V-type proton ATPase subunit c (161 aa).

Over 1–9 (MSTDLCPVY) the chain is Lumenal. The chain crosses the membrane as a helical span at residues 10–32 (APFFGVMGCTAAIVFASFGAAYG). Over 33–54 (TAKAGVGISAMGVLRPDLIVKN) the chain is Cytoplasmic. A helical transmembrane segment spans residues 55–75 (TIPVVMAGIIAIYGLVVSVLI). At 76 to 91 (SGNLKQILSLYSGFIQ) the chain is on the lumenal side. A helical transmembrane segment spans residues 92–113 (LGAGLSVGLAGLAAGFAIGIVG). At 114–125 (DAGVRGTAQQPR) the chain is on the cytoplasmic side. The chain crosses the membrane as a helical span at residues 126 to 151 (LFVAMILILIFAEVLGLYGLIVALLL). Over 152–161 (NTRATDNVTC) the chain is Lumenal.

Belongs to the V-ATPase proteolipid subunit family. In terms of assembly, V-ATPase is a heteromultimeric enzyme composed of a peripheral catalytic V1 complex (components A to H) attached to an integral membrane V0 proton pore complex (components: a, c, c', c'', d, e, f and VOA1). The decameric c-ring forms the proton-conducting pore, and is composed of eight proteolipid subunits c, one subunit c' and one subunit c''.

It is found in the vacuole membrane. Its function is as follows. Proton-conducting pore forming subunit of the V0 complex of vacuolar(H+)-ATPase (V-ATPase), a multisubunit enzyme composed of a peripheral complex (V1) that hydrolyzes ATP and a membrane integral complex (V0) that translocates protons. V-ATPase is responsible for acidifying and maintaining the pH of intracellular compartments. This is V-type proton ATPase subunit c from Schizosaccharomyces pombe (strain 972 / ATCC 24843) (Fission yeast).